The following is a 218-amino-acid chain: Small ribosomal subunit protein uS3c (218 aa).

In terms of domain architecture, KH type-2 spans 47–118; that stretch reads VQKNIRISSG…KLNIAITRIS (72 aa).

Belongs to the universal ribosomal protein uS3 family. As to quaternary structure, part of the 30S ribosomal subunit.

It localises to the plastid. The protein resides in the chloroplast. The protein is Small ribosomal subunit protein uS3c (rps3) of Nasturtium officinale (Watercress).